A 689-amino-acid chain; its full sequence is MSEKTFLVEIGTEELPPKALRSLAESFAANFTAELDNAGLAHGNVEWFAAPRRLALKVANLAESQPDREVEKRGPAIAQAFDAEGKPSKAAEGWARGCGITVDQAERLKTDKGEWLLYRAHVKGESTEALVPNMVATSLAKLPIPKLMRWGASDVHFVRPVHTVTLLLGDKVIPATILGIQSDRVIRGHRFMGEPEFTIDNADQYPQILLERGKVIADYEARKAKIKADAEEAARKIGGNADLSESLLEEVASLVEWPVVLTAKFEEKFLSVPAEALVYTMKGDQKYFPVYDNAGKLLPNFIFVANIESKDPTQIISGNEKVVRPRLADAEFFFNTDRKKRLEDHLPRLQTVLFQQQLGTLRDKTDRIQALAGWIAGQIGADVNHATRAGLLSKCDLMTNMVFEFTDTQGVMGMHYARHDGEAEDVAVALNEQYQPRFAGDDLPSNPVACALAIADKMDTLAGIFGIGQHPKGDKDPFALRRAALGVLRIIVEKNLALDLQTLTEEAVRLYGDKLTNANVVDDVIDFMLGRFRAWYQDEGYTVDTIQAVLARRPTRPADFDARMKAVSHFRTLEEASALAAANKRVSNILAKATEPLNDIVHASVLKEAAEIELARHLVVLRDKLQPYFADGRYQEALIELAALRAPVDEFFENVMVNAEEKDIRINRLTLLSKLRELFLQVADISLLQ.

The protein belongs to the class-II aminoacyl-tRNA synthetase family. Tetramer of two alpha and two beta subunits.

It localises to the cytoplasm. The catalysed reaction is tRNA(Gly) + glycine + ATP = glycyl-tRNA(Gly) + AMP + diphosphate. The chain is Glycine--tRNA ligase beta subunit from Salmonella dublin (strain CT_02021853).